Consider the following 483-residue polypeptide: Myosin-binding protein H (483 aa).

Over residues 1-15 (MTGKATSEASVSTPE) the composition is skewed to polar residues. Residues 1 to 78 (MTGKATSEAS…PEPPSEDVPS (78 aa)) are disordered. Thr2, Thr6, and Thr26 each carry phosphothreonine. Positions 41–66 (QEQAPEPQKPQAQDPAAPAASAMPAA) are enriched in low complexity. In terms of domain architecture, Fibronectin type-III 1 spans 79-174 (APLRLTLEDV…LDQPVHIQEI (96 aa)). The Ig-like C2-type 1 domain maps to 178 to 266 (PKIRVPRHLR…EGLEAKASID (89 aa)). A Fibronectin type-III 2 domain is found at 275 to 370 (PPSSIKLLDV…TKELAHIHKA (96 aa)). The Ig-like C2-type 2 domain occupies 388-472 (PSFTQPLADH…INVLGEASVD (85 aa)).

It belongs to the immunoglobulin superfamily. MyBP family. Skeletal muscle. Expressed at low levels in heart ventricles.

Binds to myosin; probably involved in interaction with thick myofilaments in the A-band. This chain is Myosin-binding protein H (Mybph), found in Mus musculus (Mouse).